A 346-amino-acid polypeptide reads, in one-letter code: uncharacterized protein (346 aa).

This is an uncharacterized protein from Acanthamoeba polyphaga (Amoeba).